The primary structure comprises 614 residues: Subtilin transport ATP-binding protein SpaT (614 aa).

The next 5 helical transmembrane spans lie at 34–54, 69–89, 147–167, 175–195, and 267–287; these read FLKL…SLYI, VSIV…SELI, IIQA…SIAF, VSLL…KIGQ, and IAVQ…AFAG. The ABC transmembrane type-1 domain occupies 34–320; that stretch reads FLKLIRFSII…IMTSIYSIYN (287 aa). In terms of domain architecture, ABC transporter spans 353-593; it reads VVFQNVSFIY…CPLYKKMDES (241 aa). 387 to 394 provides a ligand contact to ATP; sequence GPNGSGKK.

It belongs to the ABC transporter superfamily.

It localises to the cell membrane. Probably implicated in the export process of the lantibiotic subtilin. The polypeptide is Subtilin transport ATP-binding protein SpaT (spaT) (Bacillus subtilis).